A 132-amino-acid chain; its full sequence is Glycine cleavage system H protein (132 aa).

In terms of domain architecture, Lipoyl-binding spans 27–109 (FATIGISAFA…FDFGWILKVK (83 aa)). Position 68 is an N6-lipoyllysine (K68).

The protein belongs to the GcvH family. As to quaternary structure, the glycine cleavage system is composed of four proteins: P, T, L and H. Requires (R)-lipoate as cofactor.

Functionally, the glycine cleavage system catalyzes the degradation of glycine. The H protein shuttles the methylamine group of glycine from the P protein to the T protein. This chain is Glycine cleavage system H protein, found in Rhodopirellula baltica (strain DSM 10527 / NCIMB 13988 / SH1).